Reading from the N-terminus, the 410-residue chain is Probable inactive allantoicase (410 aa).

This sequence belongs to the allantoicase family.

The function of this enzyme is unclear as allantoicase activity is not known to exist in mammals. In Macaca fascicularis (Crab-eating macaque), this protein is Probable inactive allantoicase (ALLC).